Consider the following 54-residue polypeptide: Ovomucoid (54 aa).

The region spanning 4–54 is the Kazal-like domain; that stretch reads VDCSDHPKPVCSLEYMPLCGSDSKTYSNKCDFCNAVVESNGTLTLSHFGKC. 3 disulfides stabilise this stretch: cysteine 6–cysteine 36, cysteine 14–cysteine 33, and cysteine 22–cysteine 54. Asparagine 43 carries an N-linked (GlcNAc...) asparagine glycan.

The protein resides in the secreted. This Rhea americana (Greater rhea) protein is Ovomucoid.